The primary structure comprises 179 residues: MSIENLKNSLPEYAKDLKLNLSSIARSTVLNEQQLWGTLLASAAATRSATTLREIAEEAADVLSAEAYNAALGAASIMGMNNVFYRGKAFLGGRYDDLRAGLRMQIIGNPGVDKADFELWSFAVSSINGCAHCLEAHEHTLREAGVSREVIFESLRVAAIVAGVGQAVQSTEALAAAAV.

The Proton donor role is filled by Cys130. Cys130 and Cys133 are oxidised to a cystine. Cys133 acts as the Cysteine sulfenic acid (-SOH) intermediate in catalysis.

It belongs to the AhpD family. As to quaternary structure, homotrimer.

The catalysed reaction is N(6)-[(R)-dihydrolipoyl]-L-lysyl-[lipoyl-carrier protein] + a hydroperoxide = N(6)-[(R)-lipoyl]-L-lysyl-[lipoyl-carrier protein] + an alcohol + H2O. Its function is as follows. Antioxidant protein with alkyl hydroperoxidase activity. Required for the reduction of the AhpC active site cysteine residues and for the regeneration of the AhpC enzyme activity. This is Alkyl hydroperoxide reductase AhpD from Nocardia farcinica (strain IFM 10152).